Here is a 190-residue protein sequence, read N- to C-terminus: Small ribosomal subunit protein uS4 (190 aa).

Residues 106–178 (RRLQTVVFKH…GRVKRVKRNA (73 aa)) enclose the S4 RNA-binding domain. A disordered region spans residues 166–190 (GRPGRVKRVKRNAAKKGSGGGDDDE). The segment covering 169-179 (GRVKRVKRNAA) has biased composition (basic residues).

Belongs to the universal ribosomal protein uS4 family.

The sequence is that of Small ribosomal subunit protein uS4 from Trypanosoma brucei brucei.